The sequence spans 365 residues: 3-dehydroquinate synthase (365 aa).

NAD(+) contacts are provided by residues 95–99 (GVVGD), 119–120 (TT), Lys132, and Lys141. 3 residues coordinate Zn(2+): Glu174, His238, and His255.

The protein belongs to the sugar phosphate cyclases superfamily. Dehydroquinate synthase family. The cofactor is Co(2+). Zn(2+) serves as cofactor. Requires NAD(+) as cofactor.

The protein resides in the cytoplasm. It catalyses the reaction 7-phospho-2-dehydro-3-deoxy-D-arabino-heptonate = 3-dehydroquinate + phosphate. Its pathway is metabolic intermediate biosynthesis; chorismate biosynthesis; chorismate from D-erythrose 4-phosphate and phosphoenolpyruvate: step 2/7. In terms of biological role, catalyzes the conversion of 3-deoxy-D-arabino-heptulosonate 7-phosphate (DAHP) to dehydroquinate (DHQ). This Chlorobium chlorochromatii (strain CaD3) protein is 3-dehydroquinate synthase.